An 85-amino-acid chain; its full sequence is Small ribosomal subunit protein bS20 (85 aa).

This sequence belongs to the bacterial ribosomal protein bS20 family.

Its function is as follows. Binds directly to 16S ribosomal RNA. The polypeptide is Small ribosomal subunit protein bS20 (Lactobacillus johnsonii (strain CNCM I-12250 / La1 / NCC 533)).